The sequence spans 600 residues: Glutamine--fructose-6-phosphate aminotransferase [isomerizing] (600 aa).

The active-site Nucleophile; for GATase activity is Cys-2. The Glutamine amidotransferase type-2 domain occupies 2-217 (CGIVGFIGEQ…DKEIVIVTKE (216 aa)). SIS domains follow at residues 283–422 (IRNA…AKGE) and 452–590 (LAKQ…VDKP). Lys-595 functions as the For Fru-6P isomerization activity in the catalytic mechanism.

In terms of assembly, homodimer.

The protein localises to the cytoplasm. It carries out the reaction D-fructose 6-phosphate + L-glutamine = D-glucosamine 6-phosphate + L-glutamate. Catalyzes the first step in hexosamine metabolism, converting fructose-6P into glucosamine-6P using glutamine as a nitrogen source. This chain is Glutamine--fructose-6-phosphate aminotransferase [isomerizing], found in Bacillus cereus (strain ATCC 14579 / DSM 31 / CCUG 7414 / JCM 2152 / NBRC 15305 / NCIMB 9373 / NCTC 2599 / NRRL B-3711).